The chain runs to 326 residues: Putative GTPase CC_2483 (326 aa).

Residues 61–69 (GVPGAGKST), aspartate 203, and 238–240 (SGL) each bind GTP.

Belongs to the SIMIBI class G3E GTPase family. ArgK/MeaB subfamily.

May have GTPase activity. May also bind and hydrolyze ATP. May function as chaperone. This is Putative GTPase CC_2483 from Caulobacter vibrioides (strain ATCC 19089 / CIP 103742 / CB 15) (Caulobacter crescentus).